A 357-amino-acid chain; its full sequence is tRNA-specific 2-thiouridylase MnmA (357 aa).

ATP contacts are provided by residues 8 to 15 (GISGGVDS) and I34. Residue C96 is the Nucleophile of the active site. An intrachain disulfide couples C96 to C192. G120 contributes to the ATP binding site. The interaction with tRNA stretch occupies residues 142–144 (KDQ). C192 functions as the Cysteine persulfide intermediate in the catalytic mechanism. The interaction with tRNA stretch occupies residues 301-302 (RY).

It belongs to the MnmA/TRMU family.

The protein resides in the cytoplasm. It catalyses the reaction S-sulfanyl-L-cysteinyl-[protein] + uridine(34) in tRNA + AH2 + ATP = 2-thiouridine(34) in tRNA + L-cysteinyl-[protein] + A + AMP + diphosphate + H(+). Catalyzes the 2-thiolation of uridine at the wobble position (U34) of tRNA, leading to the formation of s(2)U34. The polypeptide is tRNA-specific 2-thiouridylase MnmA (Chlorobium phaeobacteroides (strain DSM 266 / SMG 266 / 2430)).